The primary structure comprises 335 residues: Nuclear distribution protein nudE homolog 1 (335 aa).

The interval 1 to 93 is self-association; the sequence is MEDSGKTFSS…VQHSEGYRQI (93 aa). Positions 18-188 form a coiled coil; sequence WKDLAMTYKQ…ELAVQQKQEK (171 aa). The interaction with PAFAH1B1 stretch occupies residues 88–156; it reads EGYRQISALE…ERNAFLESEL (69 aa). Positions 167–290 are interaction with CENPF; that stretch reads QRLKDEARDL…QSPNRTGGPA (124 aa). Residues 181-246 are disordered; it reads AVQQKQEKPR…DDSTGGTPLT (66 aa). A compositionally biased stretch (polar residues) spans 204 to 214; it reads TAVQATGSVPS. Residue S211 is modified to Phosphoserine. Phosphothreonine is present on residues T215 and T228. Residues S231 and S239 each carry the phosphoserine modification. 2 positions are modified to phosphothreonine: T243 and T246. C274 is lipidated: S-palmitoyl cysteine; by ZDHHC2, ZDHHC3 and ZDHHC7. Positions 279-335 are disordered; the sequence is YDQSPNRTGGPASGRSSKNRDGGERRPSSTSVPLGDKGLDTSCRWLSKSTTRSSSSC. Phosphoserine is present on S282. The span at 296–305 shows a compositional bias: basic and acidic residues; sequence KNRDGGERRP. Residue S309 is modified to Phosphoserine. The segment covering 325 to 335 has biased composition (low complexity); that stretch reads SKSTTRSSSSC.

This sequence belongs to the nudE family. As to quaternary structure, homodimer. Interacts with CNTRL, LIS1, dynein, SLMAP and TCP1. Interacts with CENPF, dynactin, tubulin gamma, PAFAH1B1, PCM1 and PCNT. Interacts with ZNF365. Interacts with GTP-bound RAB9A and RAB9B; the interaction leads to RAB9-dynein motor tethering. Interacts (via C-terminus) with MCRS1 (via C-terminus); phosphorylation of NDE1 inhibits the interaction. Phosphorylated in mitosis. Phosphorylated in vitro by CDC2. Phosphorylation at Thr-246 is essential for the G2/M transition. Expressed in the neuroepithelium throughout the developing brain, including the cerebral cortex and cerebellum.

It localises to the cytoplasm. It is found in the cytoskeleton. Its subcellular location is the microtubule organizing center. The protein resides in the centrosome. The protein localises to the chromosome. It localises to the centromere. It is found in the kinetochore. Its subcellular location is the spindle. The protein resides in the cleavage furrow. The protein localises to the cytoplasmic vesicle membrane. In terms of biological role, required for centrosome duplication and formation and function of the mitotic spindle. Essential for the development of the cerebral cortex. May regulate the production of neurons by controlling the orientation of the mitotic spindle during division of cortical neuronal progenitors of the proliferative ventricular zone of the brain. Orientation of the division plane perpendicular to the layers of the cortex gives rise to two proliferative neuronal progenitors whereas parallel orientation of the division plane yields one proliferative neuronal progenitor and a postmitotic neuron. A premature shift towards a neuronal fate within the progenitor population may result in an overall reduction in the final number of neurons and an increase in the number of neurons in the deeper layers of the cortex. Acts as a RAB9A/B effector that tethers RAB9-associated late endosomes to the dynein motor for their retrograde transport to the trans-Golgi network. This Homo sapiens (Human) protein is Nuclear distribution protein nudE homolog 1.